The following is a 150-amino-acid chain: Small ribosomal subunit protein eS19 (150 aa).

The protein belongs to the eukaryotic ribosomal protein eS19 family. As to quaternary structure, part of the 30S ribosomal subunit.

In terms of biological role, may be involved in maturation of the 30S ribosomal subunit. The chain is Small ribosomal subunit protein eS19 from Thermococcus kodakarensis (strain ATCC BAA-918 / JCM 12380 / KOD1) (Pyrococcus kodakaraensis (strain KOD1)).